The sequence spans 636 residues: Methyl-CpG-binding domain protein 1 (636 aa).

The region spanning 1–69 is the MBD domain; the sequence is MAESWQDCPA…TLFDFRQGTL (69 aa). A disordered region spans residues 75 to 113; it reads KTHPLAVPSKKKKKPSKPAKTKKQQVGLQRSEVRIETPQ. Over residues 83-97 the composition is skewed to basic residues; sequence SKKKKKPSKPAKTKK. A Nuclear localization signal motif is present at residues 84–88; the sequence is KKKKK. Residue K117 forms a Glycyl lysine isopeptide (Lys-Gly) (interchain with G-Cter in SUMO2) linkage. 2 consecutive CXXC-type zinc fingers follow at residues 187-234 and 235-281; these read RMFK…RRCL and RIME…RRCF. Residues C194, C197, C200, C206, C209, C212, C228, C233, C243, C246, C249, C255, C258, C261, C275, and C280 each coordinate Zn(2+). Residues 291-314 form a disordered region; the sequence is GSKVASQRHSQAPPLPPHPASQYT. K293 participates in a covalent cross-link: Glycyl lysine isopeptide (Lys-Gly) (interchain with G-Cter in SUMO2). Residues 348–396 form a CXXC-type 3 zinc finger; sequence TNQRQNRKCGACAACLRRMDCGRCDFCCDKPKFGGGNQKRQKCRWRQCL. Zn(2+) contacts are provided by C356, C359, C362, C368, C371, C374, C390, and C395. The segment at 407-474 is disordered; that stretch reads AGSGSGEGAG…GRGSVLPQPD (68 aa). S409 bears the Phosphoserine mark. Glycyl lysine isopeptide (Lys-Gly) (interchain with G-Cter in SUMO2) cross-links involve residues K443 and K461. Glycyl lysine isopeptide (Lys-Gly) (interchain with G-Cter in SUMO2); alternate cross-links involve residues K520 and K559. The tract at residues 543–589 is disordered; that stretch reads QSGFPSKAADPDLSPVKQEPPGPEEDGEEKKDDVSETTPAEEIGGVG. Residues 550–612 form a transcriptional repression domain (TRD) region; the sequence is AADPDLSPVK…RLRDAEAWLP (63 aa).

In terms of assembly, interacts with OASL, ATF7IP, ATF7IP2 and BAHD1. Binds CHAF1A and the SUV39H1-CBX5 complex via the MBD domain. Binds MGP via the TRD domain. May be part of the MeCP1 complex. During DNA replication, it recruits SETDB1 to form a S phase-specific complex that facilitates methylation of H3 'Lys-9' during replication-coupled chromatin assembly and is at least composed of the CAF-1 subunit CHAF1A, MBD1 and SETDB1. Interacts with the Ten-1 ICD form of TENM1. In terms of processing, sumoylated, sumoylation may increase interaction with ATF7IP. In terms of tissue distribution, highly expressed in kidney, liver and brain. Detected at lower levels in heart, lung, skeletal muscle, spleen and testis.

Its subcellular location is the nucleus. It is found in the nucleus matrix. It localises to the nucleus speckle. The protein resides in the chromosome. Transcriptional repressor that binds CpG islands in promoters where the DNA is methylated at position 5 of cytosine within CpG dinucleotides. Binding is abolished by the presence of 7-mG that is produced by DNA damage by methylmethanesulfonate (MMS). Acts as transcriptional repressor and plays a role in gene silencing by recruiting ATF7IP, which in turn recruits factors such as the histone methyltransferase SETDB1. Probably forms a complex with SETDB1 and ATF7IP that represses transcription and couples DNA methylation and histone 'Lys-9' trimethylation. Isoform 1 can also repress transcription from unmethylated promoters. The polypeptide is Methyl-CpG-binding domain protein 1 (Mus musculus (Mouse)).